A 162-amino-acid polypeptide reads, in one-letter code: Peroxiredoxin-2C (162 aa).

Residues 4 to 162 (VAVGDTLPDG…SGAEEILKAL (159 aa)) form the Thioredoxin domain. Cys-51 acts as the Cysteine sulfenic acid (-SOH) intermediate in catalysis.

The protein belongs to the peroxiredoxin family. Prx5 subfamily. In terms of assembly, monomer.

The protein localises to the cytoplasm. It catalyses the reaction [glutaredoxin]-dithiol + a hydroperoxide = [glutaredoxin]-disulfide + an alcohol + H2O. Functionally, reduces hydrogen peroxide and alkyl hydroperoxides with reducing equivalents provided through the thioredoxin or glutaredoxin system. May be involved in intracellular redox signaling. Thiol-specific peroxidase that catalyzes the reduction of hydrogen peroxide and organic hydroperoxides to water and alcohols, respectively. Plays a role in cell protection against oxidative stress by detoxifying peroxides. The chain is Peroxiredoxin-2C (PRXIIC) from Oryza sativa subsp. japonica (Rice).